Here is a 504-residue protein sequence, read N- to C-terminus: Cytochrome P450 3A11 (504 aa).

Cysteine 443 contributes to the heme binding site.

Belongs to the cytochrome P450 family. Heme is required as a cofactor. In terms of tissue distribution, highly expressed in liver.

It localises to the endoplasmic reticulum membrane. The protein resides in the microsome membrane. It carries out the reaction an organic molecule + reduced [NADPH--hemoprotein reductase] + O2 = an alcohol + oxidized [NADPH--hemoprotein reductase] + H2O + H(+). Functionally, catalyzes erythromycin N-demethylation, nifedipine oxidation and testosterone 6 beta-hydroxylation. This is Cytochrome P450 3A11 (Cyp3a11) from Mus musculus (Mouse).